Reading from the N-terminus, the 458-residue chain is MSDTNEENRDEPTVVIVGPNDAQTETTDSTVNVETSSDADKNRVALEANINAQVVAMDEDQYYDQLELRANEVAADAEIYEAPDQPANYRNSGIIDLYDEAKDFLDSSATPQWNDKFWGLIDMGGHCNAGANAIFRTVIKALLYKKYYGAFPIIGDEYDSNKQDMVGSSKDSFYTILGLRNNDKPGKLTHIEAAILDMCTNLVCSQRNPKVWFFVSDAQVGRFMLDFQKHMEVRYGQNAHGSISIFTGPIPLRERNYGQNEGSLDLYEVAQVLQCVQNAETDHQVYQLATSPNQLYFKTRVAVKDGQDVIKHVPVEGGLYVKTYAPEFKHPEKLDGQYVEPRYEGNEIGKDVEYTLMDPTTDYHRVGASRVKRYGDTLMEYTETIPRPECGLIVLLNQCYYFAKARLNPFALLEMRLRSRGGAANRIVSRWLEKGEPLMAHDVVQTLENVVLDGAMQN.

Over residues 1–12 the composition is skewed to basic and acidic residues; sequence MSDTNEENRDEP. A disordered region spans residues 1–27; that stretch reads MSDTNEENRDEPTVVIVGPNDAQTETT.

This Micromonas pusilla (Picoplanktonic green alga) protein is Putative non-structural protein 2 (S8).